Here is a 158-residue protein sequence, read N- to C-terminus: AAAMKNVTELNEPLSNEERNLLSVAYKNVVGARRSSWRVISSIEQKTSFYLKMKGDYYRYLAEVATGEKRATVVESSEKAYSEAHEISKEHMQPTHPIRLGLALNYSVFYYEITAFDDAIAELDTLNEDSYKDSTLIMQLLRDNLTLWTSDQQDDDGG.

An interaction with SPATA18/MIEAP region spans residues 1 to 158 (AAAMKNVTEL…TSDQQDDDGG (158 aa)). Ser-48 is modified (phosphoserine). At Tyr-60 the chain carries Phosphotyrosine. Thr-72 carries the post-translational modification Phosphothreonine. Ser-130 is modified (phosphoserine). Thr-149 carries the post-translational modification Phosphothreonine. Residue Ser-150 is modified to Phosphoserine.

This sequence belongs to the 14-3-3 family. In terms of assembly, homodimer. Part of a complex that contains DSG3, PKP1, YAP1 and YWHAG; the complex is required for localization of DSG3 and YAP1 to the cell membrane in keratinocytes. Interacts with SAMSN1. Interacts with RAF1, SSH1 and CRTC2/TORC2. Interacts with ABL1 (phosphorylated form); the interaction retains it in the cytoplasm. Interacts with GAB2. Interacts with MDM4 (phosphorylated); negatively regulates MDM4 activity toward TP53. Interacts with PKA-phosphorylated AANAT and SIRT2. Interacts with the 'Thr-369' phosphorylated form of DAPK2. Interacts with PI4KB, TBC1D22A and TBC1D22B. Interacts with SLITRK1. Interacts with LRRK2; this interaction is dependent on LRRK2 phosphorylation. Interacts with MARK2 and MARK3. Interacts with MEFV. Interacts with ENDOG, TSC2 and PIK3C3; interaction with ENDOG weakens its interaction with TSC2 and PIK3C3. Interacts with (phosphorylated) WDR24. Interacts with BEST1; this interaction promotes L-glutamate channel activity leading to the positive regulation of NMDA glutamate receptor activity through the L-glutamate secretion. Interacts with PKP1 (when phosphorylated); the interaction results in translocation of PKP1 to the cytoplasm and loss of intercellular adhesion in keratinocytes. Interacts with SPATA18/MIEAP; a protein that also plays a role in MALM. Phosphorylated by various PKC isozymes.

The protein resides in the cytoplasm. It localises to the cytosol. Its subcellular location is the mitochondrion matrix. Its function is as follows. Adapter protein implicated in the regulation of a large spectrum of both general and specialized signaling pathways. Binds to a large number of partners, usually by recognition of a phosphoserine or phosphothreonine motif. Binding generally results in the modulation of the activity of the binding partner. Promotes inactivation of WDR24 component of the GATOR2 complex by binding to phosphorylated WDR24. Participates in the positive regulation of NMDA glutamate receptor activity by promoting the L-glutamate secretion through interaction with BEST1. Reduces keratinocyte intercellular adhesion, via interacting with PKP1 and sequestering it in the cytoplasm, thereby reducing its incorporation into desmosomes. Plays a role in mitochondrial protein catabolic process (also named MALM) that promotes the degradation of damaged proteins inside mitochondria. This Ovis aries (Sheep) protein is 14-3-3 protein gamma.